We begin with the raw amino-acid sequence, 147 residues long: Large ribosomal subunit protein uL15 (147 aa).

The disordered stretch occupies residues 1 to 54; that stretch reads MKLFELQPAPGSKKLPNRKGRGIGSGNGKTGGRGHKGQNARAGGGVRPGFEGGQ. 2 stretches are compositionally biased toward gly residues: residues 22–31 and 42–52; these read GIGSGNGKTG and AGGGVRPGFEG.

It belongs to the universal ribosomal protein uL15 family. Part of the 50S ribosomal subunit.

Its function is as follows. Binds to the 23S rRNA. The protein is Large ribosomal subunit protein uL15 of Ruminiclostridium cellulolyticum (strain ATCC 35319 / DSM 5812 / JCM 6584 / H10) (Clostridium cellulolyticum).